A 283-amino-acid polypeptide reads, in one-letter code: Elongation factor Ts (283 aa).

Positions 79 to 82 (TDFV) are involved in Mg(2+) ion dislocation from EF-Tu.

Belongs to the EF-Ts family.

It is found in the cytoplasm. Its function is as follows. Associates with the EF-Tu.GDP complex and induces the exchange of GDP to GTP. It remains bound to the aminoacyl-tRNA.EF-Tu.GTP complex up to the GTP hydrolysis stage on the ribosome. In Shewanella frigidimarina (strain NCIMB 400), this protein is Elongation factor Ts.